A 92-amino-acid chain; its full sequence is Exodeoxyribonuclease 7 small subunit (92 aa).

The segment covering 71–84 (AESAGTAKSAVAAD) has biased composition (low complexity). The segment at 71 to 92 (AESAGTAKSAVAADSRGAADSA) is disordered.

Belongs to the XseB family. In terms of assembly, heterooligomer composed of large and small subunits.

It is found in the cytoplasm. It catalyses the reaction Exonucleolytic cleavage in either 5'- to 3'- or 3'- to 5'-direction to yield nucleoside 5'-phosphates.. In terms of biological role, bidirectionally degrades single-stranded DNA into large acid-insoluble oligonucleotides, which are then degraded further into small acid-soluble oligonucleotides. This Leifsonia xyli subsp. xyli (strain CTCB07) protein is Exodeoxyribonuclease 7 small subunit.